A 329-amino-acid polypeptide reads, in one-letter code: tRNA (guanine(10)-N2)-dimethyltransferase (329 aa).

The region spanning 40–143 (NVENVEIFER…KLWIGIRIRE (104 aa)) is the THUMP domain.

This sequence belongs to the methyltransferase superfamily. Trm-G10 family. In terms of assembly, monomer.

The protein localises to the cytoplasm. The catalysed reaction is guanosine(10) in tRNA + 2 S-adenosyl-L-methionine = N(2)-dimethylguanosine(10) in tRNA + 2 S-adenosyl-L-homocysteine + 2 H(+). In terms of biological role, catalyzes the adenosylmethionine-dependent methylation of the exocyclic amino group (N(2)) of guanosine at position 10 of various tRNAs. Acts via a two-step process that leads to the formation of either N(2)-monomethyl (m(2)G) or N(2)-dimethylguanosine (m(2)(2)G). In Pyrococcus abyssi (strain GE5 / Orsay), this protein is tRNA (guanine(10)-N2)-dimethyltransferase (trmG10).